Reading from the N-terminus, the 138-residue chain is Ribosome-binding factor A (138 aa).

Residues 117-138 are disordered; that stretch reads ERQNKPAASTEKPPVGSLDADL.

Belongs to the RbfA family. In terms of assembly, monomer. Binds 30S ribosomal subunits, but not 50S ribosomal subunits or 70S ribosomes.

It is found in the cytoplasm. In terms of biological role, one of several proteins that assist in the late maturation steps of the functional core of the 30S ribosomal subunit. Associates with free 30S ribosomal subunits (but not with 30S subunits that are part of 70S ribosomes or polysomes). Required for efficient processing of 16S rRNA. May interact with the 5'-terminal helix region of 16S rRNA. This Acaryochloris marina (strain MBIC 11017) protein is Ribosome-binding factor A.